Here is a 320-residue protein sequence, read N- to C-terminus: Aspartate carbamoyltransferase catalytic subunit (320 aa).

Positions 53 and 54 each coordinate carbamoyl phosphate. Lys-82 serves as a coordination point for L-aspartate. Carbamoyl phosphate contacts are provided by Arg-103, His-131, and Gln-134. Arg-164 and Arg-227 together coordinate L-aspartate. Residues Leu-266 and Pro-267 each coordinate carbamoyl phosphate.

It belongs to the aspartate/ornithine carbamoyltransferase superfamily. ATCase family. As to quaternary structure, heterododecamer (2C3:3R2) of six catalytic PyrB chains organized as two trimers (C3), and six regulatory PyrI chains organized as three dimers (R2).

The catalysed reaction is carbamoyl phosphate + L-aspartate = N-carbamoyl-L-aspartate + phosphate + H(+). It functions in the pathway pyrimidine metabolism; UMP biosynthesis via de novo pathway; (S)-dihydroorotate from bicarbonate: step 2/3. Catalyzes the condensation of carbamoyl phosphate and aspartate to form carbamoyl aspartate and inorganic phosphate, the committed step in the de novo pyrimidine nucleotide biosynthesis pathway. The polypeptide is Aspartate carbamoyltransferase catalytic subunit (Bifidobacterium longum (strain NCC 2705)).